The following is a 148-amino-acid chain: Putative nickel-responsive regulator (148 aa).

Ni(2+)-binding residues include His88, His99, His101, and Cys107.

It belongs to the transcriptional regulatory CopG/NikR family. Homotetramer. Ni(2+) serves as cofactor.

Its function is as follows. Transcriptional regulator. This chain is Putative nickel-responsive regulator, found in Helicobacter pylori (strain J99 / ATCC 700824) (Campylobacter pylori J99).